A 161-amino-acid chain; its full sequence is Urease accessory protein UreE (161 aa).

Belongs to the UreE family.

Its subcellular location is the cytoplasm. In terms of biological role, involved in urease metallocenter assembly. Binds nickel. Probably functions as a nickel donor during metallocenter assembly. The chain is Urease accessory protein UreE from Pseudarthrobacter chlorophenolicus (strain ATCC 700700 / DSM 12829 / CIP 107037 / JCM 12360 / KCTC 9906 / NCIMB 13794 / A6) (Arthrobacter chlorophenolicus).